Consider the following 802-residue polypeptide: Nuclear polyadenylated RNA-binding protein 3 (802 aa).

Disordered stretches follow at residues Met1 to Thr174 and Ala252 to Phe293. The span at Ser22–Ser34 shows a compositional bias: low complexity. A compositionally biased stretch (acidic residues) spans Asp37 to Lys73. Residue Thr86 is modified to Phosphothreonine. Acidic residues-rich tracts occupy residues Asp101–Asn139 and Ala149–Asp158. The span at Lys159–Thr174 shows a compositional bias: basic and acidic residues. Low complexity predominate over residues Ser260 to Ser276. Residues Asn277–Phe293 are compositionally biased toward basic and acidic residues. The region spanning Ser330–Ser401 is the RRM domain. Residue Thr451 is modified to Phosphothreonine. 2 disordered regions span residues Ile571 to Gln675 and Met717 to Lys802. The segment covering Pro575–Gln590 has biased composition (pro residues). Residues Tyr593–Gly614 are compositionally biased toward low complexity. Over residues Met632–Ser642 the composition is skewed to polar residues. Composition is skewed to low complexity over residues Gln651–Ala661 and Met717–Ser738. The segment covering Thr745–Ala754 has biased composition (polar residues). Positions Ser757 to Gln769 are enriched in pro residues. Positions Gln770–Pro785 are enriched in low complexity.

The protein localises to the nucleus. Its subcellular location is the nucleoplasm. May be required for packaging pre-mRNAs into ribonucleoprotein structures amenable to efficient nuclear RNA processing. Binds to poly(A)+ RNA. Appears to act in the maintenance of CLN3 mRNA levels. In Saccharomyces cerevisiae (strain ATCC 204508 / S288c) (Baker's yeast), this protein is Nuclear polyadenylated RNA-binding protein 3 (NAB3).